Reading from the N-terminus, the 650-residue chain is MGKIIGIDLGTTNSCVAIMEGNSVKVIENSEGARTTPSIIAYMEDGEILVGAPAKRQSVTNPKNTLYAVKRLIGRRFEEKEVQKDIALMPYKIMKADNGDAWIEVRDQKLAPPQISAETLRKMKKTAEDYLGEPVTEAVITVPAYFNDSQRQATKDAGRIAGLEVKRIINEPTAAALAFGLDKAEKGDRKIAVYDLGGGTFDVSIIEIADVDGEMQFEVLSTNGDTFLGGEDFDQRIIDYIIAEFKKEQGVDLSKDVLALQRLKESAEKAKIELSSSQQTEINLPYITADASGPKHLDLKITRAKLEALVEELIERTIEPCRVAIKDAGVKVGEIDDVILVGGMTRMPKVQEKVKEFFGKDPRRDVNPDEAVAVGAAIQGQVLSGDRKDVLLLDVTPLSLGIETLGGVMTKMINKNTTIPTKHAQVYSTADDNQGAVTIKVFQGEREMAAGNKLLGEFNLEGIPPAPRGTPQIEVSFDIDANGILHVGAKDKATGKENRITIKANSGLSEAEIEKMVKDAEANAEEDHKLRELADARNQGDALVHSTKKALTEYGDKLEAAEKEKIEAALKDLEETLKSGSADKAAIEAKIEVVATASQKMGEKMYADMQAAQGAEAAAAGAAGAGATAGGASQQQDDVVDAEFKEVKKD.

Thr-200 carries the post-translational modification Phosphothreonine; by autocatalysis.

The protein belongs to the heat shock protein 70 family.

In terms of biological role, acts as a chaperone. The chain is Chaperone protein DnaK from Paraburkholderia phytofirmans (strain DSM 17436 / LMG 22146 / PsJN) (Burkholderia phytofirmans).